A 274-amino-acid chain; its full sequence is Glucosamine-6-phosphate deaminase (274 aa).

The Proton acceptor; for enolization step role is filled by Asp72. Asp141 functions as the For ring-opening step in the catalytic mechanism. The active-site Proton acceptor; for ring-opening step is His143. The For ring-opening step role is filled by Glu148.

This sequence belongs to the glucosamine/galactosamine-6-phosphate isomerase family. In terms of assembly, homohexamer.

The protein resides in the cytoplasm. It carries out the reaction alpha-D-glucosamine 6-phosphate + H2O = beta-D-fructose 6-phosphate + NH4(+). It participates in nucleotide-sugar biosynthesis; UDP-N-acetyl-alpha-D-glucosamine biosynthesis; alpha-D-glucosamine 6-phosphate from D-fructose 6-phosphate: step 1/1. In terms of biological role, catalyzes the reversible conversion of alpha-D-glucosamine 6-phosphate (GlcN-6P) into beta-D-fructose 6-phosphate (Fru-6P) and ammonium ion, a regulatory reaction step in de novo uridine diphosphate-N-acetyl-alpha-D-glucosamine (UDP-GlcNAc) biosynthesis via hexosamine pathway. In Drosophila pseudoobscura pseudoobscura (Fruit fly), this protein is Glucosamine-6-phosphate deaminase.